The primary structure comprises 491 residues: CTD small phosphatase-like protein 1 (491 aa).

Disordered regions lie at residues 1–53, 140–198, 221–249, and 261–282; these read MTYA…SLDY, KLTK…TARR, KIQS…TGPP, and TVTG…DGVT. The span at 17–26 shows a compositional bias: pro residues; it reads VPPPRTPVGP. Positions 37–49 are enriched in polar residues; sequence SASQPLQPKNGAN. Basic and acidic residues predominate over residues 141–156; that stretch reads LTKDEKNGGKMNRDGG. Over residues 176-187 the composition is skewed to polar residues; the sequence is ASTPLNSFSANA. Over residues 223 to 237 the composition is skewed to low complexity; it reads QSSQRTNSTNNNHQN. Polar residues-rich tracts occupy residues 238–249 and 264–276; these read GRPSTPTNTGPP and GLPT…QQNG. In terms of domain architecture, FCP1 homology spans 307-465; the sequence is QDSNKKCLVI…LDILPSLEHL (159 aa). Residue D317 is the 4-aspartylphosphate intermediate of the active site. Mg(2+) contacts are provided by D317, D319, and N428. Catalysis depends on D319, which acts as the Proton donor.

In terms of assembly, may interact (via phosphatase domain) with cpna-1. Isoform a and isoform b may interact with lim-9 (via LIM zinc-binding domain). Isoform a and isoform b may interact (via FCP1 homology domain) with unc-89 (via fibronectin type-III domain 1, Ig-like C2-type domain 48/49 and protein kinase domain 1 or Ig-like C2-type domain 50, fibronectin type-III domain 2 and protein kinase domain 2); the interaction may act as a molecular bridge to bring two unc-89 molecules together or to stabilize a loop between the 2 protein kinase domains. The cofactor is Mg(2+). As to expression, expressed in pharyngeal, vulval and body wall muscles.

The protein localises to the cytoplasm. It is found in the myofibril. It localises to the sarcomere. Its subcellular location is the m line. The enzyme catalyses O-phospho-L-seryl-[protein] + H2O = L-seryl-[protein] + phosphate. It carries out the reaction O-phospho-L-threonyl-[protein] + H2O = L-threonyl-[protein] + phosphate. With respect to regulation, inhibited by beryllium trifluoride (BeF(3-)) and tetrafluoroaluminate (AlF(4-)) but not by sodium fluoride (NaF) or sodium orthovanadate (Na3VO4). Phosphatase which may play a role in the egg laying muscles. The polypeptide is CTD small phosphatase-like protein 1 (Caenorhabditis elegans).